Consider the following 310-residue polypeptide: Alpha/beta hydrolase domain-containing protein 17A (310 aa).

The interval 38-61 (VPEPEPGPGGAGAAPSGPLRTSAA) is disordered. Active-site charge relay system residues include S190, D255, and H284. The residue at position 307 (S307) is a Phosphoserine.

Belongs to the AB hydrolase superfamily. ABHD17 family. Post-translationally, palmitoylated on cysteine residues located in a cysteine cluster at the N-terminus which promotes membrane localization. Palmitoylation is required for post-synaptic localization and for depalmitoylating activity towards DLG4/PSD95. Expressed in brain (at protein level). Expressed in hippocampal neurons.

The protein localises to the cell membrane. The protein resides in the recycling endosome membrane. It localises to the cell projection. It is found in the dendritic spine. Its subcellular location is the postsynaptic density membrane. The catalysed reaction is S-hexadecanoyl-L-cysteinyl-[protein] + H2O = L-cysteinyl-[protein] + hexadecanoate + H(+). Its function is as follows. Hydrolyzes fatty acids from S-acylated cysteine residues in proteins. Has depalmitoylating activity towards NRAS. Has depalmitoylating activity towards DLG4/PSD95. May have depalmitoylating activity towards MAP6. This Rattus norvegicus (Rat) protein is Alpha/beta hydrolase domain-containing protein 17A.